Reading from the N-terminus, the 242-residue chain is Myogenic factor 6 (242 aa).

The segment at 31–63 (SPLYPGSDGTLSPCQDQMPPEAGSDSSGEEHVL) is disordered. Residues 93-144 (DRRKAATLRERRRLKKINEAFEALKRRTVANPNQRLPKVEILRSAINYIERL) enclose the bHLH domain.

Efficient DNA binding requires dimerization with another bHLH protein.

Its subcellular location is the nucleus. Involved in muscle differentiation (myogenic factor). Induces fibroblasts to differentiate into myoblasts. Probable sequence specific DNA-binding protein. This is Myogenic factor 6 (MYF6) from Sus scrofa (Pig).